The sequence spans 424 residues: MASSNLIQQLQERGLIAQVTDEKALAERLAAGPIALYCGFDPTADSLHLGHLVPLLCLKRFQLAGHRPVALVGGATGLIGDPSFKATERKLNTAETVQEWVEKIKRQVSPFLDFDCGDNSAVAANNYDWFGSMNVLTFLLDIGKHFSVNQMINKEAVKQRLNRDDSGISFTEFSYNLLQGYDFACLNKQYGVALQIGGSDQWGNITSGIDLTRRLHQNTVYGLTVPLITKADGTKFGKTEGGAVWLDPSKTSPYKFYQFWINTADSDVYLFLKFFTFLDLAAIDALEQEDRASDKAPRAQYVLAEEVTRMVHGEQGLAAAKRITASLFSGALADLTEDDFAQLAQDGMPTVHLERVADLQQALVAAELVPSRGQARTLISSNAVSVNGEKQASIDYVFDDADRLYSRYTLLRRGKKHYCLLNWQ.

Position 37 (Tyr-37) interacts with L-tyrosine. Positions 42–51 (PTADSLHLGH) match the 'HIGH' region motif. 2 residues coordinate L-tyrosine: Tyr-175 and Gln-179. The 'KMSKS' region motif lies at 235–239 (KFGKT). Lys-238 is an ATP binding site. An S4 RNA-binding domain is found at 357 to 414 (ADLQQALVAAELVPSRGQARTLISSNAVSVNGEKQASIDYVFDDADRLYSRYTLLRRG).

It belongs to the class-I aminoacyl-tRNA synthetase family. TyrS type 1 subfamily. Homodimer.

It is found in the cytoplasm. It catalyses the reaction tRNA(Tyr) + L-tyrosine + ATP = L-tyrosyl-tRNA(Tyr) + AMP + diphosphate + H(+). Functionally, catalyzes the attachment of tyrosine to tRNA(Tyr) in a two-step reaction: tyrosine is first activated by ATP to form Tyr-AMP and then transferred to the acceptor end of tRNA(Tyr). In Sodalis glossinidius (strain morsitans), this protein is Tyrosine--tRNA ligase.